The primary structure comprises 207 residues: Large ribosomal subunit protein uL4 (207 aa).

Over residues 44–58 the composition is skewed to basic and acidic residues; sequence RAPTRATRERSDVAR. The tract at residues 44 to 82 is disordered; that stretch reads RAPTRATRERSDVARSGKKFGRQKGGGTARHGDRRSPIF.

Belongs to the universal ribosomal protein uL4 family. In terms of assembly, part of the 50S ribosomal subunit.

Its function is as follows. One of the primary rRNA binding proteins, this protein initially binds near the 5'-end of the 23S rRNA. It is important during the early stages of 50S assembly. It makes multiple contacts with different domains of the 23S rRNA in the assembled 50S subunit and ribosome. Functionally, forms part of the polypeptide exit tunnel. This is Large ribosomal subunit protein uL4 from Zymomonas mobilis subsp. mobilis (strain ATCC 31821 / ZM4 / CP4).